We begin with the raw amino-acid sequence, 217 residues long: MAFFFRPEPKMVTPEEALKGGRHPVLESPQPHTVLGTPITGPWKEGQKRVWIGLGCFWGVEQMYWKMDGVESTSVGYAGGYTPNPTYREVCSGRTGHTEIVEVVYDPEKITLAELVARGLEAHDPTQGYRQGNDVGTQYRSAFYVETGEEAETVRQIVSTYGETLKSHGFGEITTEVDVITPADYYLAEDYHQQYLHKNPDGYCPHHSTGIPCGVEA.

A disordered region spans residues glutamate 16–isoleucine 39. Residue cysteine 56 is part of the active site.

Belongs to the MsrA Met sulfoxide reductase family.

The enzyme catalyses L-methionyl-[protein] + [thioredoxin]-disulfide + H2O = L-methionyl-(S)-S-oxide-[protein] + [thioredoxin]-dithiol. The catalysed reaction is [thioredoxin]-disulfide + L-methionine + H2O = L-methionine (S)-S-oxide + [thioredoxin]-dithiol. Its function is as follows. Has an important function as a repair enzyme for proteins that have been inactivated by oxidation. Catalyzes the reversible oxidation-reduction of methionine sulfoxide in proteins to methionine. This chain is Peptide methionine sulfoxide reductase MsrA, found in Corynebacterium efficiens (strain DSM 44549 / YS-314 / AJ 12310 / JCM 11189 / NBRC 100395).